We begin with the raw amino-acid sequence, 214 residues long: Variable small protein 1 (214 aa).

Positions 1 to 18 (MRKRISAIIMTLFMVFMS) are cleaved as a signal peptide. Cysteine 19 is lipidated: N-palmitoyl cysteine. Residue cysteine 19 is the site of S-diacylglycerol cysteine attachment.

It belongs to the variable small protein (Vsp) family.

It is found in the cell outer membrane. The Vlp and Vsp proteins are antigenically distinct proteins, only one vlp or vsp gene is transcriptionally active at any one time. Switching between these genes is a mechanism of host immune response evasion. This is Variable small protein 1 from Borrelia hermsii.